Consider the following 400-residue polypeptide: 1-deoxy-D-xylulose 5-phosphate reductoisomerase (400 aa).

The NADPH site is built by Thr17, Gly18, Ser19, Ile20, and Asn131. Lys132 contributes to the 1-deoxy-D-xylulose 5-phosphate binding site. An NADPH-binding site is contributed by Glu133. Position 157 (Asp157) interacts with Mn(2+). 1-deoxy-D-xylulose 5-phosphate-binding residues include Ser158, Glu159, Ser188, and His211. Glu159 lines the Mn(2+) pocket. NADPH is bound at residue Gly217. 4 residues coordinate 1-deoxy-D-xylulose 5-phosphate: Ser224, Asn229, Lys230, and Glu233. Position 233 (Glu233) interacts with Mn(2+).

This sequence belongs to the DXR family. Mg(2+) serves as cofactor. Mn(2+) is required as a cofactor.

The catalysed reaction is 2-C-methyl-D-erythritol 4-phosphate + NADP(+) = 1-deoxy-D-xylulose 5-phosphate + NADPH + H(+). Its pathway is isoprenoid biosynthesis; isopentenyl diphosphate biosynthesis via DXP pathway; isopentenyl diphosphate from 1-deoxy-D-xylulose 5-phosphate: step 1/6. Its function is as follows. Catalyzes the NADPH-dependent rearrangement and reduction of 1-deoxy-D-xylulose-5-phosphate (DXP) to 2-C-methyl-D-erythritol 4-phosphate (MEP). The chain is 1-deoxy-D-xylulose 5-phosphate reductoisomerase from Pseudomonas putida (strain ATCC 47054 / DSM 6125 / CFBP 8728 / NCIMB 11950 / KT2440).